The primary structure comprises 267 residues: MHYIKTWSLLGEMSEKLRRCRKELTAAIDRAFEGVSYSQECTGQQRLELSAAPLSFSLPVHRLLCRRHPLAACSSAAPFAAVPCAPENENPAFATNHAPVNAKPHALCPERKPLTSKENVLMHSSILAPERESWRTAGEGENWRKENLRKDMERDLKADSNMPLNNSSQEVTKDLLDMIDHTSIRTIEELAGKIEFENELNHMCGHCQDSPFKEEAWALLMDKSPQKATDADPGSLKQAFDDHNIVETVLDLEEDYNVMTSFKYQIE.

Residues S210 and S224 each carry the phosphoserine modification.

In terms of tissue distribution, testis. Down-regulated in men with spermatocyte arrest.

Its function is as follows. Essential for normal spermatogenesis and male fertility. This is an uncharacterized protein from Homo sapiens (Human).